A 439-amino-acid polypeptide reads, in one-letter code: Transcription factor pydF (439 aa).

Over residues 1-18 the composition is skewed to basic and acidic residues; sequence MGRPQRADKQRRETDGPQ. Disordered regions lie at residues 1-53, 143-177, and 239-262; these read MGRP…GYAR, HVEK…QAVE, and AFRD…MQQH. Residues 20-35 are compositionally biased toward polar residues; that stretch reads SRPSLTQAQKNSTTIR. Basic and acidic residues predominate over residues 143–153; sequence HVEKATAERPG. Positions 157-172 are enriched in low complexity; it reads SSSPSSSLLRTSSSPS. Positions 243 to 260 are enriched in polar residues; the sequence is GQNNGTSRPNTAASQNMQ.

It localises to the nucleus. Its function is as follows. Transcription factor; part of the gene cluster that mediates the biosynthesis of pyrrocidines, fungal natural products containing a macrocyclic para-cyclophane connected to a decahydrofluorene ring system that show potent antibiotic activities toward Gram-negative bacteria. This is Transcription factor pydF from Acremonium sp.